Here is a 50-residue protein sequence, read N- to C-terminus: Small ribosomal subunit protein uS14 (50 aa).

4 residues coordinate Zn(2+): Cys-15, Cys-18, Cys-33, and Cys-36.

This sequence belongs to the universal ribosomal protein uS14 family. Zinc-binding uS14 subfamily. Part of the 30S ribosomal subunit. Zn(2+) is required as a cofactor.

Binds 16S rRNA, required for the assembly of 30S particles. The chain is Small ribosomal subunit protein uS14 from Methanosarcina mazei (strain ATCC BAA-159 / DSM 3647 / Goe1 / Go1 / JCM 11833 / OCM 88) (Methanosarcina frisia).